Consider the following 338-residue polypeptide: MTKLPKLLLGLTFSVSLIPFSSLLITSTDVNKQPVPTALQRTGASAIHEGSFQTITLGQSLMEQIEQLQQFTPAQRFTQFKKKFPNQKLLSQSELSPVDVYNFLSGWQDALVSFLDRVIKLQGKVKEANEIFNPNVGDQIVLPKKENPNVLEVLGEYNGFGFFPTLGKNGLNLPQQIFENFTDFKVESYQINDFKVSLVGERDIIKNDKVRFSYAVQIPLNLELLVNNQKVTFNITVDLRTNNFSTQETFNDLFNNGTAPTNWQFFSRIKVNKLHYDQTDATHLANTLLQDQFNALNLDLQKSIYDLNLDDLEERFEEEYAKPLREKRTQQKKEWEEE.

This sequence belongs to the MG032/MG096/MG288 family.

This is an uncharacterized protein from Mycoplasma pneumoniae (strain ATCC 29342 / M129 / Subtype 1) (Mycoplasmoides pneumoniae).